The following is an 88-amino-acid chain: Small ribosomal subunit protein uS15 (88 aa).

Belongs to the universal ribosomal protein uS15 family. In terms of assembly, part of the 30S ribosomal subunit. Forms a bridge to the 50S subunit in the 70S ribosome, contacting the 23S rRNA.

Functionally, one of the primary rRNA binding proteins, it binds directly to 16S rRNA where it helps nucleate assembly of the platform of the 30S subunit by binding and bridging several RNA helices of the 16S rRNA. Its function is as follows. Forms an intersubunit bridge (bridge B4) with the 23S rRNA of the 50S subunit in the ribosome. The polypeptide is Small ribosomal subunit protein uS15 (Geobacter sulfurreducens (strain ATCC 51573 / DSM 12127 / PCA)).